Consider the following 144-residue polypeptide: Bacilliredoxin BrxA (144 aa).

Residues C53 and C55 each act as nucleophile in the active site. The residue at position 53 (C53) is an S-bacillithiol cysteine disulfide. A CXC active site motif motif is present at residues 53–55 (CGC). C53 and C55 are oxidised to a cystine.

Belongs to the bacilliredoxin family. Post-translationally, N-terminal Cys of the CXC active site motif can react with bacillithiol (BSH) to form mixed disulfides. S-bacillithiolation protects Cys residues against overoxidation by acting as a redox switch in response to oxidative stress.

Its function is as follows. S-bacillithiolation is the formation of mixed disulfide bonds between protein thiols and the general thiol reductant bacillithiol (BSH) under oxidative stress. BSH is an equivalent of glutathione (GSH) in Firmicutes. This protein is a dithiol bacilliredoxin, which debacillithiolates (removes BSH) the S-bacillithiolated OhrR (OhrR-SSB) in vitro and in vivo NaOCl-generated S-bacillithiolated MetE (MetE-SSB). Involved in maintaining redox homeostasis in response to disulfide stress conditions. Has a redox potential of -130 mV. Displays weak protein disulfide isomerase activity in vitro. This is Bacilliredoxin BrxA from Bacillus subtilis (strain 168).